The chain runs to 233 residues: ATP-dependent Clp protease proteolytic subunit 1 (233 aa).

Ser136 functions as the Nucleophile in the catalytic mechanism. His161 is a catalytic residue.

Belongs to the peptidase S14 family. Fourteen ClpP subunits assemble into 2 heptameric rings which stack back to back to give a disk-like structure with a central cavity, resembling the structure of eukaryotic proteasomes.

The protein resides in the cytoplasm. It catalyses the reaction Hydrolysis of proteins to small peptides in the presence of ATP and magnesium. alpha-casein is the usual test substrate. In the absence of ATP, only oligopeptides shorter than five residues are hydrolyzed (such as succinyl-Leu-Tyr-|-NHMec, and Leu-Tyr-Leu-|-Tyr-Trp, in which cleavage of the -Tyr-|-Leu- and -Tyr-|-Trp bonds also occurs).. Functionally, cleaves peptides in various proteins in a process that requires ATP hydrolysis. Has a chymotrypsin-like activity. Plays a major role in the degradation of misfolded proteins. The sequence is that of ATP-dependent Clp protease proteolytic subunit 1 from Bifidobacterium longum (strain NCC 2705).